The following is a 948-amino-acid chain: Putative helicase 009L (948 aa).

The Helicase ATP-binding domain maps to 64–243; sequence LSEDTPYREL…ADVLNLILPQ (180 aa). 77–84 contributes to the ATP binding site; it reads HAPGTGKT. The DEAH box motif lies at 187 to 190; it reads DEVH. The Helicase C-terminal domain occupies 371-554; it reads VKYDYLVRVA…AVERILMTSA (184 aa).

In Frog virus 3 (isolate Goorha) (FV-3), this protein is Putative helicase 009L.